The sequence spans 790 residues: MEATAEESVSTLVTTMVDETYEFLAPRWFDFVNGETEDESRRAELWFQSALSCAPSPSVPRIKARRSFKVEAMCNFNEAEEETLKDKEPLEPVVPIVSLQSQPSQAKKAEVAPSKASTVKPSRISSKDAEVNNKTVDASDPTTEPIEDKENIAPACTPKPPMQFSLGAKSVDLKKQQTARKIASLLKNPSTLRPKNQSQAKGSHQKSVKGETNLNNIASTTNLIQENQAIKRQKLDDGKSRQILNPKPATLLHKTRNGLVNTGFNLCPSVTKHTPKENRKVYVREQIAPFVSTAELMKKFQTSTRDLFVQNRPKLTLTRPKEPEFVTSQRARPLRVKSSAELEEEMLAKIPKFKARPVNKKILAAPALPAPQRSTPHLPEFQEFHLQTMARANQHAETSSIASTEVSKQHNDQKHHLTEPKSPVLQTMLRARPTIAKTTAELEQEELEKAPKFKAKPLNKKIFESKGEMGIFCNTKKHITIPQEFHFATDERISRPESVLDIFDKLSLNSESCHEKPLPRNTAPNPFNLKTEERGAEKEKKFYMELMYKKLGDVKARVPKANPYPYTTDYPVVPPKPEPKQCTQPEPFQLESLVRHEEEMRREREERRRMETEEAQKRLFKAQPVIKEDPIPVPEKVRMPLTEIQEFNLHVEHRAVERADFDHKIKEKENQYKRYREESEAAKMVEEERALKQMRKTMVPHARPVPNFNKPFLPQKSNKGTTKAKSPNLRVIKRTERRTMMARPTISAATSASAVHCLMYPGSSFNKLKKKTVLTNIVHCLMYPDSSLLN.

Disordered stretches follow at residues 101–160, 188–211, and 394–417; these read SQPS…TPKP, NPST…VKGE, and QHAE…KHHL. 4 stretches are compositionally biased toward polar residues: residues 115–124, 132–142, 188–202, and 395–406; these read KASTVKPSRI, NNKTVDASDPT, NPST…QAKG, and HAETSSIASTEV. A compositionally biased stretch (basic and acidic residues) spans 407–417; it reads SKQHNDQKHHL. Coiled-coil stretches lie at residues 588–619 and 656–698; these read FQLE…QKRL and VERA…RKTM. Residues 701–727 are disordered; it reads HARPVPNFNKPFLPQKSNKGTTKAKSP. Residues 715–725 are compositionally biased toward polar residues; sequence QKSNKGTTKAK.

The protein belongs to the TPX2 family. Interacts with AUR1.

The protein localises to the nucleus. The protein resides in the nucleoplasm. It is found in the cytoplasm. It localises to the cytoskeleton. Its subcellular location is the spindle. The protein localises to the phragmoplast. Functionally, regulates prospindle assembly during late prophase and at the onset of mitosis, before nuclear envelope breakdown (NEB). Is exported from the nucleus shortly before NEB and organized into two polar crescents. After NEB, is progressively associated with the forming spindle. Probably mediates AUR1 activation and localization to spindle microtubules. Has a microtubule binding capability and is able to trigger microtubule assembly induced by RanGTP in a heterologous system. Not involved in phragmoplast assembly, nuclear envelope reformation, and cortical microtubule assembly at the onset of G1. Involved in the formation of specific nuclear and perinuclear microtubular arrays in the nuclei of acentrosomal plant cells. Fungi and plants have acentrosomal microtubule arrays because they lack centrosomes. They use other microtubule organizing center (MTOC) structures to organize their microtubules. May function through interaction with importin. This chain is Protein TPX2 (TPX2), found in Arabidopsis thaliana (Mouse-ear cress).